The following is a 102-amino-acid chain: MYAIVRAGAKQQKVAVGDVIEIDQVETAAGEKVTLPVVLVVDGETVTSDAKKLDKASVTAEVLGGTKGPKIVIQKYKNKTGYKKRQGHRQKYTQVKVTDISL.

It belongs to the bacterial ribosomal protein bL21 family. Part of the 50S ribosomal subunit. Contacts protein L20.

In terms of biological role, this protein binds to 23S rRNA in the presence of protein L20. This is Large ribosomal subunit protein bL21 from Nocardioides sp. (strain ATCC BAA-499 / JS614).